Reading from the N-terminus, the 421-residue chain is UDP-N-acetylglucosamine 1-carboxyvinyltransferase (421 aa).

A phosphoenolpyruvate-binding site is contributed by 22–23 (KN). Arginine 93 contacts UDP-N-acetyl-alpha-D-glucosamine. Cysteine 117 serves as the catalytic Proton donor. Cysteine 117 is modified (2-(S-cysteinyl)pyruvic acid O-phosphothioketal). Residues 122–126 (RPVDQ), aspartate 309, and isoleucine 331 each bind UDP-N-acetyl-alpha-D-glucosamine.

The protein belongs to the EPSP synthase family. MurA subfamily.

It is found in the cytoplasm. It catalyses the reaction phosphoenolpyruvate + UDP-N-acetyl-alpha-D-glucosamine = UDP-N-acetyl-3-O-(1-carboxyvinyl)-alpha-D-glucosamine + phosphate. It participates in cell wall biogenesis; peptidoglycan biosynthesis. In terms of biological role, cell wall formation. Adds enolpyruvyl to UDP-N-acetylglucosamine. The protein is UDP-N-acetylglucosamine 1-carboxyvinyltransferase of Albidiferax ferrireducens (strain ATCC BAA-621 / DSM 15236 / T118) (Rhodoferax ferrireducens).